Reading from the N-terminus, the 200-residue chain is UPF0316 protein SAUSA300_1892 (200 aa).

Helical transmembrane passes span 8–28, 40–60, and 66–86; these read PWLMVLTIFIINICYVTFLTM, IAASVSFLEVLVYIVGLGLVM, and IQNIIAYAFGFSIGIIVGMKI.

The protein belongs to the UPF0316 family.

The protein resides in the cell membrane. The protein is UPF0316 protein SAUSA300_1892 of Staphylococcus aureus (strain USA300).